The following is a 479-amino-acid chain: F-box/LRR-repeat protein 16 (479 aa).

A disordered region spans residues 1–62; that stretch reads MSSPGIDGDP…PTLPPPSLAA (62 aa). The segment covering 47–60 has biased composition (pro residues); sequence CQPPPPPTLPPPSL. Position 92 is an omega-N-methylarginine (Arg92). Residues 94 to 139 enclose the F-box domain; the sequence is PLATDEKILNGLFWYFSACEKCVLAQVCKAWRRVLYQPKFWAGLTP. LRR repeat units follow at residues 244–266, 267–290, 319–343, 345–369, 371–395, 396–420, and 446–470; these read ITSLSVSDCINVADDAIAAISQL, LPNLAELSLQAYHVTDTALAYFTA, LPNLTALSLSGCSKVTDDGVELVAE, LRKLRSLDLSWCPRITDMALEYVAC, LHRLEELVLDRCVRITDTGLSYLST, MSSLRSLYLRWCCQVQDFGLKHLLA, and LQELEELELTNCPGATPELFKYFSQ.

Interacts with SKP1 and CUL1.

Substrate-recognition component of the SCF (SKP1-CUL1-F-box protein)-type E3 ubiquitin ligase complex. The polypeptide is F-box/LRR-repeat protein 16 (FBXL16) (Homo sapiens (Human)).